A 283-amino-acid polypeptide reads, in one-letter code: UPF0276 protein Anae109_1558 (283 aa).

This sequence belongs to the UPF0276 family.

The chain is UPF0276 protein Anae109_1558 from Anaeromyxobacter sp. (strain Fw109-5).